Consider the following 317-residue polypeptide: Apolipoprotein E (317 aa).

A signal peptide spans 1 to 18 (MKVLWVALVITLLAGCQA). Tandem repeats lie at residues 80-101 (VLMDETMKEVKAYREELEEQLG), 102-123 (PVAQETQARVSKELQAAQARLA), 124-145 (SDMQDVRGRLAQYRSEVQAMMG), 146-167 (HTTDELRDRLASHLRKLRKRLL), 168-189 (RDAEDLQKRLAVYRAGALEGSE), 190-211 (RSVSAIRERLGPLVEQGRARAA), 212-233 (TVGTLASQTLRERAEAWHQKLR), and 234-255 (GRVEEMGTQARDHLEEMREQLD). Residues 80 to 255 (VLMDETMKEV…HLEEMREQLD (176 aa)) form an 8 X 22 AA approximate tandem repeats region. Position 143 is a methionine sulfoxide (M143). Residues 158-168 (HLRKLRKRLLR) are LDL and other lipoprotein receptors binding. Residue 162–165 (LRKR) participates in heparin binding. A lipid-binding and lipoprotein association region spans residues 210–290 (AATVGTLASQ…SWFEPLVEDM (81 aa)). 229 to 236 (HQKLRGRV) serves as a coordination point for heparin. The interval 266–317 (TQMRLQAEAFQARLKSWFEPLVEDMQRQWAGLVEKVQLAMATSSTSAPSENH) is homooligomerization. Residues 278 to 290 (RLKSWFEPLVEDM) form a specificity for association with VLDL region.

Belongs to the apolipoprotein A1/A4/E family. As to quaternary structure, homotetramer. May interact with ABCA1; functionally associated with ABCA1 in the biogenesis of HDLs. May interact with APP/A4 amyloid-beta peptide; the interaction is extremely stable in vitro but its physiological significance is unclear. May interact with MAPT. May interact with MAP2. In the cerebrospinal fluid, interacts with secreted SORL1. Interacts with PMEL; this allows the loading of PMEL luminal fragment on ILVs to induce fibril nucleation. APOE exists as multiple glycosylated and sialylated glycoforms within cells and in plasma. The extent of glycosylation and sialylation are tissue and context specific. In terms of processing, glycated in plasma VLDL. Post-translationally, phosphorylated by FAM20C in the extracellular medium.

The protein localises to the secreted. The protein resides in the extracellular space. It is found in the extracellular matrix. Its subcellular location is the extracellular vesicle. It localises to the endosome. The protein localises to the multivesicular body. In terms of biological role, APOE is an apolipoprotein, a protein associating with lipid particles, that mainly functions in lipoprotein-mediated lipid transport between organs via the plasma and interstitial fluids. APOE is a core component of plasma lipoproteins and is involved in their production, conversion and clearance. Apolipoproteins are amphipathic molecules that interact both with lipids of the lipoprotein particle core and the aqueous environment of the plasma. As such, APOE associates with chylomicrons, chylomicron remnants, very low density lipoproteins (VLDL) and intermediate density lipoproteins (IDL) but shows a preferential binding to high-density lipoproteins (HDL). It also binds a wide range of cellular receptors including the LDL receptor/LDLR and the very low-density lipoprotein receptor/VLDLR that mediate the cellular uptake of the APOE-containing lipoprotein particles. Finally, APOE also has a heparin-binding activity and binds heparan-sulfate proteoglycans on the surface of cells, a property that supports the capture and the receptor-mediated uptake of APOE-containing lipoproteins by cells. The chain is Apolipoprotein E (APOE) from Physeter macrocephalus (Sperm whale).